Consider the following 267-residue polypeptide: Regulatory protein RecX (267 aa).

The protein belongs to the RecX family.

The protein localises to the cytoplasm. Its function is as follows. Modulates RecA activity. The polypeptide is Regulatory protein RecX (Staphylococcus epidermidis (strain ATCC 12228 / FDA PCI 1200)).